A 69-amino-acid polypeptide reads, in one-letter code: DNA gyrase inhibitor YacG (69 aa).

Residues Cys13, Cys16, Cys32, and Cys36 each coordinate Zn(2+).

It belongs to the DNA gyrase inhibitor YacG family. Interacts with GyrB. Zn(2+) serves as cofactor.

In terms of biological role, inhibits all the catalytic activities of DNA gyrase by preventing its interaction with DNA. Acts by binding directly to the C-terminal domain of GyrB, which probably disrupts DNA binding by the gyrase. In Neisseria meningitidis serogroup B (strain ATCC BAA-335 / MC58), this protein is DNA gyrase inhibitor YacG.